A 466-amino-acid chain; its full sequence is Probable agmatine/putrescine antiporter AguD (466 aa).

Helical transmembrane passes span 8-28 (FSLFSAILSVICVVFVAEAAA), 30-50 (VAAIGNSQFFWWIVLIVAFLL), 85-105 (ASWFYWVNFPLWMASLAVLCP), 120-140 (ISLLIELIFIWVIVLISLYPV), 144-164 (VWILNGGAVIKVFLALALGGL), 192-212 (LSFISVIIFNLLGFEVICTFA), 226-246 (IIIGGIVIAAIYMFSAFGIGV), 273-293 (WFISLIAFLFMLTLVGNMVSW), 325-345 (WGAALMNGIVATFIVVIAPLL), 350-370 (LFWSFFSLNLVLFLLSYIPVF), 398-418 (VYMALPMIIIIISLIFTAIPL), and 426-446 (TEQLPITIGAIIFIVIGELII).

The protein belongs to the amino acid-polyamine-organocation (APC) superfamily. Glutamate:GABA antiporter (GGA) (TC 2.A.3.7) family.

The protein localises to the cell membrane. Its function is as follows. Probably catalyzes agmatine/putrescine exchange. This Lactococcus lactis subsp. lactis (strain IL1403) (Streptococcus lactis) protein is Probable agmatine/putrescine antiporter AguD.